Consider the following 174-residue polypeptide: Vimentin-type intermediate filament-associated coiled-coil protein (174 aa).

Residues 7-97 adopt a coiled-coil conformation; sequence LQIREANAHL…DQRDQMIQQL (91 aa). A disordered region spans residues 128 to 174; sequence GPLPASHSHRAQLLPDGPGPPLGNNMGKEEGQDDQDDQQPAVFGTTV.

The protein localises to the cytoplasm. This is Vimentin-type intermediate filament-associated coiled-coil protein (Vmac) from Mus musculus (Mouse).